The sequence spans 505 residues: Xylose import ATP-binding protein XylG (505 aa).

2 ABC transporter domains span residues 6–243 (LEMR…VGRE) and 262–505 (VKNY…TGGK). Residue 38 to 45 (GENGAGKS) participates in ATP binding.

This sequence belongs to the ABC transporter superfamily. Xylose importer (TC 3.A.1.2.4) family. The complex is composed of two ATP-binding proteins (XylG), two transmembrane proteins (XylH) and a solute-binding protein (XylF).

The protein resides in the cell membrane. The catalysed reaction is D-xylose(out) + ATP + H2O = D-xylose(in) + ADP + phosphate + H(+). Its function is as follows. Part of the ABC transporter complex XylFGH involved in xylose import. Responsible for energy coupling to the transport system. The sequence is that of Xylose import ATP-binding protein XylG from Thermoanaerobacter pseudethanolicus (strain ATCC 33223 / 39E) (Clostridium thermohydrosulfuricum).